The primary structure comprises 270 residues: PspA protein (270 aa).

The disordered stretch occupies residues 238-270; the sequence is MRGEALPAGGTTATPRPATETSGGAIAEQPYGQ. Residues 240 to 258 show a composition bias toward low complexity; that stretch reads GEALPAGGTTATPRPATET.

It belongs to the PspA/Vipp/IM30 family.

Its subcellular location is the cytoplasm. In terms of biological role, involved in resistance to stress. Associates with and regulates lipid droplets (LDs) homeostasis under conditions of stress and may regulate non-replicating persistence (NRP). Could be involved in preservation of envelope integrity and tolerance to surface stress. This is PspA protein from Mycobacterium tuberculosis (strain ATCC 25177 / H37Ra).